The primary structure comprises 556 residues: Guard cell S-type anion channel SLAC1 (556 aa).

Residues 1 to 103 (MERKQSNAHS…GIINGGDGRK (103 aa)) form a disordered region. Over 1–189 (MERKQSNAHS…EQWPFLLRFP (189 aa)) the chain is Cytoplasmic. A coiled-coil region spans residues 10-36 (STFADINEVEDEAEQELQQQENNNNKR). The span at 25 to 34 (ELQQQENNNN) shows a compositional bias: low complexity. S59 carries the phosphoserine; by SRK2E modification. The span at 69–79 (RESRERDDKKS) shows a compositional bias: basic and acidic residues. Phosphoserine; by SRK2E occurs at positions 86, 113, and 120. Over residues 86-99 (SFGGFESGGIINGG) the composition is skewed to gly residues. S146 carries the phosphoserine modification. A helical membrane pass occupies residues 190–210 (IGCFGICLGLSSQAVLWLALA). Over 211–216 (KSPATN) the chain is Extracellular. Residues 217-237 (FLHITPLINLVVWLFSLVVLV) traverse the membrane as a helical segment. Residues 238–265 (SVSFTYILKCIFYFEAVKREYFHPVRVN) lie on the Cytoplasmic side of the membrane. A helical transmembrane segment spans residues 266-286 (FFFAPWVVCMFLAISVPPMFS). Residues 287-295 (PNRKYLHPA) are Extracellular-facing. The chain crosses the membrane as a helical span at residues 296-316 (IWCVFMGPYFFLELKIYGQWL). At 317-325 (SGGKRRLCK) the chain is on the cytoplasmic side. Residues 326 to 346 (VANPSSHLSVVGNFVGAILAS) traverse the membrane as a helical segment. Over 347-352 (KVGWDE) the chain is Extracellular. The chain crosses the membrane as a helical span at residues 353–373 (VAKFLWAVGFAHYLVVFVTLY). Residues 374-388 (QRLPTSEALPKELHP) lie on the Cytoplasmic side of the membrane. Residues 389 to 409 (VYSMFIAAPSAASIAWNTIYG) traverse the membrane as a helical segment. Over 410-418 (QFDGCSRTC) the chain is Extracellular. A helical membrane pass occupies residues 419 to 439 (FFIALFLYISLVARINFFTGF). Residue K440 is a topological domain, cytoplasmic. The chain crosses the membrane as a helical span at residues 441 to 463 (FSVAWWSYTFPMTTASVATIKYA). Residues 464–479 (EAVPGYPSRALALTLS) are Extracellular-facing. A helical membrane pass occupies residues 480–500 (FISTAMVCVLFVSTLLHAFVW). Topologically, residues 501–556 (QTLFPNDLAIAITKRKLTREKKPFKRAYDLKRWTKQALAKKISAEKDFEAEEESHH) are cytoplasmic.

The protein belongs to the SLAC1 S-type anion channel family. As to quaternary structure, homotrimer. Interacts with SRK2E, CPK6, CPK21, CPK23 and PP2CA. The channel is inactivated upon PP2CA and ABI1 binding. Interacts with KAT1, KAT2, KAT3/KC1 and AKT2. Interacts with GHR1. In terms of processing, phosphorylation by SRK2E, especially on Ser-120, activates the channel. Also phosphorylated and activated by CPK21 and CPK23. Abscisic acid (ABA) promotes phosphorylation. This phosphorylation is inhibited by ABI1. Phosphorylated and activated by GHR1; this phosphorylation is repressed by ABI2 but not ABI1. Phosphorylated by HT1 on N-terminus but not C-terminus. Preferentially expressed in guard cells. Also detected in the vascular strands close to the leaf margins.

The protein resides in the cell membrane. Activated by GHR1-mediated phosphorylation which is negatively regulated by ABI2 but not ABI1. Activation by SRK2E/OST1 and GHR1 is repressed by HT1. In terms of biological role, slow, weak voltage-dependent S-type anion efflux channel involved in maintenance of anion homeostasis. Cl(-) efflux through SLAC1 causes membrane depolarization, which activates outward-rectifying K1 channels, leading to KCl and water efflux to reduce turgor further and cause stomatal closure, that reduces water loss and promotes leaf turgor. Essential for stomatal closure in response to CO(2), abscisic acid (ABA), ozone O(3), light/dark transitions, humidity change, calcium ions, hydrogen peroxide H(2)O(2), reactive oxygen species (ROS), and nitric oxide. Binds to the highly selective inward-rectifying potassium channels KAT1 and AKT2, and inhibits their activities. Functions as an essential negative regulator of inward potassium channels in guard cells. Essential for the efficient stomatal closure and opening in guard cells. Involved in the local and/or systemic stomatal responses (e.g. stomatal closure) to light stress. The chain is Guard cell S-type anion channel SLAC1 from Arabidopsis thaliana (Mouse-ear cress).